The following is a 497-amino-acid chain: MTNKYLVEGSENELTTKTAAELAGLIHSREVTSREVTQAHLDRIAAVDGDIHAFLHVGQEEALNAADDVDKRLDAGEAPASALAGVPLALKDVFTTTDAPTTAASKMLEGYMSPYDATVTRKIREAGIPILGKTNMDEFAMGSSTENSAYGPTHNPWDLERTAGGSGGGSSAALAAGQAPLAIGTDTGGSIRQPAALTNTVGVKPTYGTVSRYGLIACASSLDQGGPTARTVLDTALLHEVIAGHDGFDATSVNRPVAPVVQAAREGANGDLKGMKVGVVKQFDRDGYQPGVLEAFHASVEQMRSQGAEIVEVDCPHFDDALGAYYLILPCEVSSNLARFDGMRYGLRAGDDGTRSADEVMAYTRAQGFGPEVKRRIILGTYALSVGYYDAYYLQAQRVRTLIAQDFAKAYEQVDILVSPTTPTTAFKLGEKVTDPLEMYNFDLCTLPLNLAGLAGMSLPSGLASDTGLPVGLQLMAPAFQDDRLYRVGAAFEAGRK.

Active-site charge relay system residues include Lys-91 and Ser-166. The disordered stretch occupies residues 143-171 (SSTENSAYGPTHNPWDLERTAGGSGGGSS). The active-site Acyl-ester intermediate is Ser-190.

This sequence belongs to the amidase family. GatA subfamily. Heterotrimer of A, B and C subunits.

It catalyses the reaction L-glutamyl-tRNA(Gln) + L-glutamine + ATP + H2O = L-glutaminyl-tRNA(Gln) + L-glutamate + ADP + phosphate + H(+). Its function is as follows. Allows the formation of correctly charged Gln-tRNA(Gln) through the transamidation of misacylated Glu-tRNA(Gln) in organisms which lack glutaminyl-tRNA synthetase. The reaction takes place in the presence of glutamine and ATP through an activated gamma-phospho-Glu-tRNA(Gln). This chain is Glutamyl-tRNA(Gln) amidotransferase subunit A, found in Corynebacterium glutamicum (strain R).